The primary structure comprises 294 residues: Bifunctional protein FolD (294 aa).

NADP(+) is bound by residues Gly-175–Ser-177 and Ile-241.

This sequence belongs to the tetrahydrofolate dehydrogenase/cyclohydrolase family. As to quaternary structure, homodimer.

The catalysed reaction is (6R)-5,10-methylene-5,6,7,8-tetrahydrofolate + NADP(+) = (6R)-5,10-methenyltetrahydrofolate + NADPH. It catalyses the reaction (6R)-5,10-methenyltetrahydrofolate + H2O = (6R)-10-formyltetrahydrofolate + H(+). It functions in the pathway one-carbon metabolism; tetrahydrofolate interconversion. Catalyzes the oxidation of 5,10-methylenetetrahydrofolate to 5,10-methenyltetrahydrofolate and then the hydrolysis of 5,10-methenyltetrahydrofolate to 10-formyltetrahydrofolate. This chain is Bifunctional protein FolD, found in Hahella chejuensis (strain KCTC 2396).